Here is a 488-residue protein sequence, read N- to C-terminus: MALSSTAATTSSKLKLSNPPSLSHTFTASASASVSNSTSFRPKLTLTRLSSSFLNPSTILHLTPSQRTNRPSSSPFTVRAARGKFERKKPHLNIGTIGHVDHGKTTLTAALTMALACLGNSAPKKYDEIDAAPEERARGITINTATVEYETETRHYAHVDCPGHADYVKNMITGAAQMDGAILVVSGADGPMPQTKEHILLAKQVGVPSVVVFLNKQDQVDDEELLELVELEVRELLSSYEFPGDDIPIVSGSALLALEALMANPTLKRGNNQWVDKIYQLMDEVDKYIPIPQRQTELPFLLAIEDVFSITXRGTVATGRIERGLVKVGDVVDLVGLRETRNTTVTGVEMFQKILDDAMAGDNVGLLLRGIQKIDIQRGMVLAKPGTITPHSKFSAIVYVLKKEEGGRHSPFFAGYRPQFYMRTTDVTGKVTSIMNDKDEESKMVMPGDRVKIVVELIVPVAIEQGMRFAIREGGKTVGAGVIGAIIE.

The interval 1-20 (MALSSTAATTSSKLKLSNPP) is disordered. The N-terminal 79 residues, 1 to 79 (MALSSTAATT…RPSSSPFTVR (79 aa)), are a transit peptide targeting the chloroplast. The 205-residue stretch at 89-293 (KPHLNIGTIG…EVDKYIPIPQ (205 aa)) folds into the tr-type G domain. Residues 98–105 (GHVDHGKT) are G1. GTP is bound at residue 98-105 (GHVDHGKT). The tract at residues 139 to 143 (GITIN) is G2. The segment at 160–163 (DCPG) is G3. GTP contacts are provided by residues 160–164 (DCPGH) and 215–218 (NKQD). Positions 215 to 218 (NKQD) are G4. Positions 253–255 (SAL) are G5.

The protein belongs to the TRAFAC class translation factor GTPase superfamily. Classic translation factor GTPase family. EF-Tu/EF-1A subfamily. Higher expression in leaves than in roots.

It is found in the plastid. It localises to the chloroplast. Its function is as follows. This protein promotes the GTP-dependent binding of aminoacyl-tRNA to the A-site of ribosomes during protein biosynthesis. The sequence is that of Elongation factor Tu, chloroplastic (tufA) from Pisum sativum (Garden pea).